We begin with the raw amino-acid sequence, 35 residues long: Putative gene 58 protein (35 aa).

The protein is Putative gene 58 protein (58) of Bacillus phage SP01 (Bacteriophage SP01).